Consider the following 136-residue polypeptide: MSLFNIFNISGSALETQSKKMDVHAKNLANSDSYIYKNGTLYPYVARIPMLQFDPISENNVGGVKMHTVAGDTSSLKSIYNPNSPIADSNGYSKVSNVDIMSETINAITASKNYQTNLEILNTTKNMIMKTLTIGQ.

It belongs to the flagella basal body rod proteins family. The basal body constitutes a major portion of the flagellar organelle and consists of four rings (L,P,S, and M) mounted on a central rod. The rod consists of about 26 subunits of FlgG in the distal portion, and FlgB, FlgC and FlgF are thought to build up the proximal portion of the rod with about 6 subunits each.

It localises to the bacterial flagellum basal body. The polypeptide is Flagellar basal-body rod protein FlgC (flgC) (Buchnera aphidicola subsp. Baizongia pistaciae (strain Bp)).